The sequence spans 997 residues: Translation initiation factor IF-2 (997 aa).

Positions 101–409 (ELAAEQAAAR…QHQDRRHEQV (309 aa)) are disordered. Low complexity-rich tracts occupy residues 116 to 185 (AEAV…QAEP), 195 to 208 (AAPAQAVAEPVEPA), and 244 to 280 (PSAPAESPKSAKAEPAAAPKTTAKPGEIRRAAAPAAP). Residues 281–292 (DRAREEARRAAE) are compositionally biased toward basic and acidic residues. Residues 385-394 (RAGGKGGRGG) are compositionally biased toward gly residues. Over residues 400-409 (QHQDRRHEQV) the composition is skewed to basic and acidic residues. Residues 498–665 (PRAPVVTVMG…NVLLQAEILE (168 aa)) enclose the tr-type G domain. The segment at 507-514 (GHVDHGKT) is G1. A GTP-binding site is contributed by 507 to 514 (GHVDHGKT). A G2 region spans residues 532–536 (GITQH). The tract at residues 553-556 (DTPG) is G3. Residues 553–557 (DTPGH) and 607–610 (NKID) contribute to the GTP site. Residues 607 to 610 (NKID) are G4. Positions 643–645 (SAK) are G5.

This sequence belongs to the TRAFAC class translation factor GTPase superfamily. Classic translation factor GTPase family. IF-2 subfamily.

It is found in the cytoplasm. Functionally, one of the essential components for the initiation of protein synthesis. Protects formylmethionyl-tRNA from spontaneous hydrolysis and promotes its binding to the 30S ribosomal subunits. Also involved in the hydrolysis of GTP during the formation of the 70S ribosomal complex. The protein is Translation initiation factor IF-2 of Bordetella bronchiseptica (strain ATCC BAA-588 / NCTC 13252 / RB50) (Alcaligenes bronchisepticus).